Consider the following 289-residue polypeptide: ATP synthase gamma chain (289 aa).

It belongs to the ATPase gamma chain family. F-type ATPases have 2 components, CF(1) - the catalytic core - and CF(0) - the membrane proton channel. CF(1) has five subunits: alpha(3), beta(3), gamma(1), delta(1), epsilon(1). CF(0) has three main subunits: a, b and c.

Its subcellular location is the cell membrane. In terms of biological role, produces ATP from ADP in the presence of a proton gradient across the membrane. The gamma chain is believed to be important in regulating ATPase activity and the flow of protons through the CF(0) complex. The sequence is that of ATP synthase gamma chain from Alkaliphilus metalliredigens (strain QYMF).